The following is a 338-amino-acid chain: Cytoskeleton protein RodZ (338 aa).

Residues 1 to 111 (MNTEATHEEN…LGKSRKKRDG (111 aa)) lie on the Cytoplasmic side of the membrane. The region spanning 19-71 (LRLAREQLGLSQQVVAERLCLKVSTVRDIEEDKAPADLASTFLRGYIRSYARL) is the HTH cro/C1-type domain. Positions 30–49 (QQVVAERLCLKVSTVRDIEE) form a DNA-binding region, H-T-H motif. A helical; Signal-anchor for type II membrane protein membrane pass occupies residues 112-132 (WLMSFTWLVLFVVVGLTGAWW). Over 133–338 (WQNHKAQQEE…TLNAEQSVTQ (206 aa)) the chain is Periplasmic. Polar residues-rich tracts occupy residues 147–180 (ADQS…QDQA) and 189–214 (GDTQ…SQQP). Residues 147-245 (ADQSSAELSQ…AQSQLPVGQA (99 aa)) form a disordered region. Residues 220-239 (SQANTDTAAQQNTTQPAQSQ) show a composition bias toward low complexity.

It belongs to the RodZ family.

It localises to the cell inner membrane. Cytoskeletal protein that is involved in cell-shape control through regulation of the length of the long axis. The sequence is that of Cytoskeleton protein RodZ from Cronobacter sakazakii (strain ATCC BAA-894) (Enterobacter sakazakii).